The chain runs to 359 residues: Cytoplasmic tRNA 2-thiolation protein 1 (359 aa).

This sequence belongs to the TtcA family. CTU1/NCS6/ATPBD3 subfamily. In terms of assembly, interacts with NCS2 and URM1. May act by forming a heterodimer with NCS2. Component of a large molecular weight complex of more than 250 kDa.

The protein localises to the cytoplasm. The protein resides in the mitochondrion. It participates in tRNA modification; 5-methoxycarbonylmethyl-2-thiouridine-tRNA biosynthesis. Functionally, plays a central role in 2-thiolation of mcm(5)S(2)U at tRNA wobble positions of tRNA(Lys), tRNA(Glu) and tRNA(Gln). Directly binds tRNAs and probably acts by catalyzing adenylation of tRNAs, an intermediate required for 2-thiolation. It is unclear whether it acts as a sulfurtransferase that transfers sulfur from thiocarboxylated URM1 onto the uridine of tRNAs at wobble position. Prior mcm(5) tRNA modification by the elongator complex is required for 2-thiolation. May also be involved in protein urmylation. May also be involved in protein urmylation and in invasive and pseudohyphal growth. This chain is Cytoplasmic tRNA 2-thiolation protein 1, found in Saccharomyces cerevisiae (strain ATCC 204508 / S288c) (Baker's yeast).